A 263-amino-acid chain; its full sequence is uncharacterized protein (263 aa).

31–38 (GPTGSGKT) is a binding site for ATP.

Belongs to the CbbQ/NirQ/NorQ/GpvN family.

This is an uncharacterized protein from Staphylococcus saprophyticus subsp. saprophyticus (strain ATCC 15305 / DSM 20229 / NCIMB 8711 / NCTC 7292 / S-41).